A 121-amino-acid chain; its full sequence is uncharacterized protein (121 aa).

This is an uncharacterized protein from Streptococcus pyogenes serotype M6 (strain ATCC BAA-946 / MGAS10394).